We begin with the raw amino-acid sequence, 564 residues long: Arginine--tRNA ligase (564 aa).

The 'HIGH' region signature appears at 130-140; it reads ANPTGSLHIGH.

It belongs to the class-I aminoacyl-tRNA synthetase family. In terms of assembly, monomer.

It is found in the cytoplasm. The enzyme catalyses tRNA(Arg) + L-arginine + ATP = L-arginyl-tRNA(Arg) + AMP + diphosphate. This is Arginine--tRNA ligase from Malacoplasma penetrans (strain HF-2) (Mycoplasma penetrans).